Consider the following 318-residue polypeptide: tRNA dimethylallyltransferase (318 aa).

Residue G9 to T16 coordinates ATP. A substrate-binding site is contributed by T11–T16. Interaction with substrate tRNA stretches follow at residues D34 to Q37 and Q158 to R162.

Belongs to the IPP transferase family. Monomer. The cofactor is Mg(2+).

It carries out the reaction adenosine(37) in tRNA + dimethylallyl diphosphate = N(6)-dimethylallyladenosine(37) in tRNA + diphosphate. In terms of biological role, catalyzes the transfer of a dimethylallyl group onto the adenine at position 37 in tRNAs that read codons beginning with uridine, leading to the formation of N6-(dimethylallyl)adenosine (i(6)A). The protein is tRNA dimethylallyltransferase of Dichelobacter nodosus (strain VCS1703A).